The chain runs to 270 residues: S-adenosylmethionine decarboxylase proenzyme (270 aa).

The active-site Schiff-base intermediate with substrate; via pyruvic acid is S117. Position 117 is a pyruvic acid (Ser); by autocatalysis (S117). Catalysis depends on H122, which acts as the Proton acceptor; for processing activity. The Proton donor; for catalytic activity role is filled by C145.

It belongs to the prokaryotic AdoMetDC family. Type 2 subfamily. As to quaternary structure, heterooctamer of four alpha and four beta chains arranged as a tetramer of alpha/beta heterodimers. Pyruvate serves as cofactor. Is synthesized initially as an inactive proenzyme. Formation of the active enzyme involves a self-maturation process in which the active site pyruvoyl group is generated from an internal serine residue via an autocatalytic post-translational modification. Two non-identical subunits are generated from the proenzyme in this reaction, and the pyruvate is formed at the N-terminus of the alpha chain, which is derived from the carboxyl end of the proenzyme. The post-translation cleavage follows an unusual pathway, termed non-hydrolytic serinolysis, in which the side chain hydroxyl group of the serine supplies its oxygen atom to form the C-terminus of the beta chain, while the remainder of the serine residue undergoes an oxidative deamination to produce ammonia and the pyruvoyl group blocking the N-terminus of the alpha chain.

It carries out the reaction S-adenosyl-L-methionine + H(+) = S-adenosyl 3-(methylsulfanyl)propylamine + CO2. It functions in the pathway amine and polyamine biosynthesis; S-adenosylmethioninamine biosynthesis; S-adenosylmethioninamine from S-adenosyl-L-methionine: step 1/1. Functionally, catalyzes the decarboxylation of S-adenosylmethionine to S-adenosylmethioninamine (dcAdoMet), the propylamine donor required for the synthesis of the polyamines spermine and spermidine from the diamine putrescine. The protein is S-adenosylmethionine decarboxylase proenzyme of Pseudoalteromonas translucida (strain TAC 125).